The following is a 312-amino-acid chain: Transcription initiation factor IIB 1 (312 aa).

A TFIIB-type zinc finger spans residues 12 to 43 (EIERCPECGSTNLIRDYEHGELVCGECGAVIE). Residues Cys16, Cys19, Cys35, and Cys38 each coordinate Zn(2+). Repeat copies occupy residues 129 to 212 (QELE…SRYL) and 223 to 304 (DYIS…ELTE).

Belongs to the TFIIB family.

Stabilizes TBP binding to an archaeal box-A promoter. Also responsible for recruiting RNA polymerase II to the pre-initiation complex (DNA-TBP-TFIIB). The sequence is that of Transcription initiation factor IIB 1 from Thermoplasma volcanium (strain ATCC 51530 / DSM 4299 / JCM 9571 / NBRC 15438 / GSS1).